A 511-amino-acid chain; its full sequence is Anthranilate synthase component 1 (511 aa).

Residues 1 to 36 (MTTHAAEAPTTDPQGAPGSQKTPDATEAEEAARATV) are disordered. The span at 11–23 (TDPQGAPGSQKTP) shows a compositional bias: polar residues. L-tryptophan-binding positions include serine 84 and 292-294 (PYM). 328-329 (GT) serves as a coordination point for chorismate. Glutamate 355 serves as a coordination point for Mg(2+). Chorismate-binding positions include tyrosine 443, arginine 463, 477 to 479 (GAG), and glycine 479. Glutamate 492 contacts Mg(2+).

It belongs to the anthranilate synthase component I family. In terms of assembly, heterotetramer consisting of two non-identical subunits: a beta subunit (TrpG) and a large alpha subunit (TrpE). Mg(2+) is required as a cofactor.

The catalysed reaction is chorismate + L-glutamine = anthranilate + pyruvate + L-glutamate + H(+). It participates in amino-acid biosynthesis; L-tryptophan biosynthesis; L-tryptophan from chorismate: step 1/5. Its activity is regulated as follows. Feedback inhibited by tryptophan. Its function is as follows. Part of a heterotetrameric complex that catalyzes the two-step biosynthesis of anthranilate, an intermediate in the biosynthesis of L-tryptophan. In the first step, the glutamine-binding beta subunit (TrpG) of anthranilate synthase (AS) provides the glutamine amidotransferase activity which generates ammonia as a substrate that, along with chorismate, is used in the second step, catalyzed by the large alpha subunit of AS (TrpE) to produce anthranilate. In the absence of TrpG, TrpE can synthesize anthranilate directly from chorismate and high concentrations of ammonia. In Streptomyces coelicolor (strain ATCC BAA-471 / A3(2) / M145), this protein is Anthranilate synthase component 1 (trpE).